Consider the following 321-residue polypeptide: Glycerol-3-phosphate dehydrogenase [NAD(P)+] (321 aa).

NADPH contacts are provided by Ser-14, Phe-15, Arg-35, and Lys-109. Sn-glycerol 3-phosphate-binding residues include Lys-109 and Gly-137. Residue Ala-141 participates in NADPH binding. Lys-192, Asp-252, Ser-262, Arg-263, and Asn-264 together coordinate sn-glycerol 3-phosphate. The active-site Proton acceptor is the Lys-192. Residue Arg-263 coordinates NADPH. Positions 287 and 289 each coordinate NADPH.

The protein belongs to the NAD-dependent glycerol-3-phosphate dehydrogenase family.

Its subcellular location is the cytoplasm. It carries out the reaction sn-glycerol 3-phosphate + NAD(+) = dihydroxyacetone phosphate + NADH + H(+). The catalysed reaction is sn-glycerol 3-phosphate + NADP(+) = dihydroxyacetone phosphate + NADPH + H(+). The protein operates within membrane lipid metabolism; glycerophospholipid metabolism. Catalyzes the reduction of the glycolytic intermediate dihydroxyacetone phosphate (DHAP) to sn-glycerol 3-phosphate (G3P), the key precursor for phospholipid synthesis. In Rickettsia felis (strain ATCC VR-1525 / URRWXCal2) (Rickettsia azadi), this protein is Glycerol-3-phosphate dehydrogenase [NAD(P)+].